Consider the following 603-residue polypeptide: F-box only protein 46 (603 aa).

The segment at 18–54 (SKYSQNQPRPPSTALKPPVCPDTSSGTEPDHRPAHLE) is disordered. Residues Ser21 and Ser67 each carry the phosphoserine modification. 4 disordered regions span residues 113–165 (SRAS…SSGD), 235–301 (EAQR…TRAK), 332–359 (EASE…ARDC), and 412–442 (QSRG…GTTD). Thr347 is subject to Phosphothreonine. Pro residues-rich tracts occupy residues 347–356 (TPPAPPPPPA) and 417–426 (EGPPEPPPAD). Residues 470-522 (RQYMLLLPEHVLVKIFSFLPTRALAALKCTCHHFKGIIEAFGVRATDSRWSRD) enclose the F-box domain.

In terms of assembly, part of a SCF (SKP1-cullin-F-box) protein ligase complex SCF(FBXO46) composed of CUL1, SKP1, RBX1 and FBXO46. Phosphorylated by ATM in response to DNA damage, promoting ubiquitination and degradation by the SCF(FBXO31) complex. Post-translationally, ATM-phosphorylated FBXO46 is ubiquitinated and degradaded by the SCF(FBXO31) complex in response to DNA damage.

It functions in the pathway protein modification; protein ubiquitination. Functionally, substrate-recognition component of the SCF(FBXO46) protein ligase complex, which mediates the ubiquitination and degradation of target proteins. In absence of stress, the SCF(FBXO46) complex catalyzes ubiquitination and degradation of MTOR-phosphorylated FBXO31. This is F-box only protein 46 (Fbxo46) from Mus musculus (Mouse).